A 169-amino-acid chain; its full sequence is Succinate dehydrogenase cytochrome b560 subunit, mitochondrial (169 aa).

Residues 1 to 29 constitute a mitochondrion transit peptide; sequence MAALLLRHVGRHCLRAHFSPQLCIRNAVP. Residues 30–65 are Mitochondrial matrix-facing; the sequence is LGTTAKEEMERFWNKNIGSNRPLSPHITIYSWSLPM. The chain crosses the membrane as a helical span at residues 66–90; that stretch reads AMSICHRGTGIALSAGVSLFGMSAL. Residues 91–110 are Mitochondrial intermembrane-facing; it reads LLPGNFESYLELVKSLCLGP. Residues 111–139 traverse the membrane as a helical segment; the sequence is ALIHTAKFALVFPLMYHTWNGIRHLMWDL. His-127 lines the heme b pocket. Topologically, residues 140–146 are mitochondrial matrix; that stretch reads GKGLKIP. Residues 147–167 form a helical membrane-spanning segment; it reads QLYQSGVVVLVLTVLSSMGLA. Residues 168–169 are Mitochondrial intermembrane-facing; sequence AM.

The protein belongs to the cytochrome b560 family. Component of complex II composed of four subunits: the flavoprotein (FP) SDHA, iron-sulfur protein (IP) SDHB, and a cytochrome b560 composed of SDHC and SDHD. It depends on heme b as a cofactor.

It localises to the mitochondrion inner membrane. It functions in the pathway carbohydrate metabolism; tricarboxylic acid cycle. Membrane-anchoring subunit of succinate dehydrogenase (SDH) that is involved in complex II of the mitochondrial electron transport chain and is responsible for transferring electrons from succinate to ubiquinone (coenzyme Q). SDH also oxidizes malate to the non-canonical enol form of oxaloacetate, enol-oxaloacetate. Enol-oxaloacetate, which is a potent inhibitor of the succinate dehydrogenase activity, is further isomerized into keto-oxaloacetate. This is Succinate dehydrogenase cytochrome b560 subunit, mitochondrial (SDHC) from Homo sapiens (Human).